The sequence spans 454 residues: tRNA modification GTPase MnmE (454 aa).

Residues arginine 23, glutamate 80, and lysine 120 each coordinate (6S)-5-formyl-5,6,7,8-tetrahydrofolate. The 162-residue stretch at glycine 216–glycine 377 folds into the TrmE-type G domain. Residue asparagine 226 participates in K(+) binding. Residues asparagine 226–serine 231, threonine 245–threonine 251, aspartate 270–glycine 273, and asparagine 335–aspartate 338 each bind GTP. Serine 230 is a binding site for Mg(2+). Residues threonine 245, isoleucine 247, and threonine 250 each coordinate K(+). Residue threonine 251 coordinates Mg(2+). Residue lysine 454 participates in (6S)-5-formyl-5,6,7,8-tetrahydrofolate binding.

The protein belongs to the TRAFAC class TrmE-Era-EngA-EngB-Septin-like GTPase superfamily. TrmE GTPase family. Homodimer. Heterotetramer of two MnmE and two MnmG subunits. Requires K(+) as cofactor.

It localises to the cytoplasm. Functionally, exhibits a very high intrinsic GTPase hydrolysis rate. Involved in the addition of a carboxymethylaminomethyl (cmnm) group at the wobble position (U34) of certain tRNAs, forming tRNA-cmnm(5)s(2)U34. This Pseudoalteromonas translucida (strain TAC 125) protein is tRNA modification GTPase MnmE.